Here is a 675-residue protein sequence, read N- to C-terminus: Polyamine deacetylase HDAC10 (675 aa).

Asp22 lines the substrate pocket. The Substrate specificity signature appears at 23–26; the sequence is PACE. Asp94 serves as a coordination point for substrate. His137 (proton donor/acceptor) is an active-site residue. 3 residues coordinate Zn(2+): Asp174, His176, and Asp267. Tyr307 is a substrate binding site. Residues 362-399 form a disordered region; sequence LAQSETNPKRPRLDATNGGPKESSEPASESNPKKTAQD.

The protein belongs to the histone deacetylase family. HD type 2 subfamily.

The protein localises to the cytoplasm. Its subcellular location is the nucleus. It carries out the reaction N(8)-acetylspermidine + H2O = spermidine + acetate. The catalysed reaction is N-acetylputrescine + H2O = putrescine + acetate. The enzyme catalyses N-acetylcadaverine + H2O = cadaverine + acetate. Polyamine deacetylase (PDAC), which acts preferentially on N(8)-acetylspermidine, and also on acetylcadaverine and acetylputrescine. Exhibits attenuated catalytic activity toward N(1),N(8)-diacetylspermidine and very low activity, if any, toward N(1)-acetylspermidine. Has a very weak lysine deacetylase, if any. The chain is Polyamine deacetylase HDAC10 (hdac10) from Danio rerio (Zebrafish).